The primary structure comprises 163 residues: Anaerobic nitrite reductase HB1 (163 aa).

The Globin domain maps to 8–157 (VFTEEQEALV…LVAAIKIEMK (150 aa)). Positions 41–45 (EIAPS) match the Homodimerization motif. Residues Ser-51, Lys-65, His-69, Lys-99, Thr-103, and His-104 each contribute to the heme b site. A Homodimerization motif is present at residues 111–123 (DEHFEVTKFALLE).

This sequence belongs to the plant globin family. As to quaternary structure, homodimer. Heme b serves as cofactor.

It is found in the cytoplasm. The protein localises to the nucleus. It catalyses the reaction Fe(III)-heme b-[protein] + nitric oxide + H2O = Fe(II)-heme b-[protein] + nitrite + 2 H(+). In terms of biological role, phytoglobin that reduces nitrite to nitric oxide (NO) under anoxic conditions (e.g. during flooding or in waterlogged soil). May not function as an oxygen storage or transport protein. Has an unusually high affinity for O(2) through an hexacoordinate heme iron because of a very low dissociation constant. The polypeptide is Anaerobic nitrite reductase HB1 (Gossypium hirsutum (Upland cotton)).